A 147-amino-acid chain; its full sequence is UPF0179 protein MTH_609 (147 aa).

This sequence belongs to the UPF0179 family.

The sequence is that of UPF0179 protein MTH_609 from Methanothermobacter thermautotrophicus (strain ATCC 29096 / DSM 1053 / JCM 10044 / NBRC 100330 / Delta H) (Methanobacterium thermoautotrophicum).